The sequence spans 572 residues: Probable terpene synthase 11 (572 aa).

Mg(2+)-binding residues include Asp-317, Asp-321, and Glu-469. A DDXXD motif motif is present at residues 317 to 321; sequence DDIFD.

This sequence belongs to the terpene synthase family. The cofactor is Mg(2+).

In terms of biological role, probable sesquiterpene synthase. This chain is Probable terpene synthase 11 (TPS11), found in Ricinus communis (Castor bean).